Consider the following 544-residue polypeptide: CTP synthase (544 aa).

The amidoligase domain stretch occupies residues 1-265 (MARFIFITGG…DEAVLSAFGI (265 aa)). Serine 13 is a binding site for CTP. Residue serine 13 participates in UTP binding. 14–19 (SLGKGL) contributes to the ATP binding site. Residue tyrosine 54 participates in L-glutamine binding. Aspartate 71 contacts ATP. The Mg(2+) site is built by aspartate 71 and glutamate 139. CTP-binding positions include 146-148 (DIE), 186-191 (KTKPTQ), and lysine 222. UTP-binding positions include 186–191 (KTKPTQ) and lysine 222. The Glutamine amidotransferase type-1 domain maps to 291–543 (TIGVVGKYVG…IAAALQQSRL (253 aa)). Glycine 355 is an L-glutamine binding site. Catalysis depends on cysteine 382, which acts as the Nucleophile; for glutamine hydrolysis. L-glutamine is bound by residues 383–386 (LGMQ), glutamate 406, and arginine 471. Catalysis depends on residues histidine 516 and glutamate 518.

Belongs to the CTP synthase family. As to quaternary structure, homotetramer.

The catalysed reaction is UTP + L-glutamine + ATP + H2O = CTP + L-glutamate + ADP + phosphate + 2 H(+). It catalyses the reaction L-glutamine + H2O = L-glutamate + NH4(+). The enzyme catalyses UTP + NH4(+) + ATP = CTP + ADP + phosphate + 2 H(+). It functions in the pathway pyrimidine metabolism; CTP biosynthesis via de novo pathway; CTP from UDP: step 2/2. With respect to regulation, allosterically activated by GTP, when glutamine is the substrate; GTP has no effect on the reaction when ammonia is the substrate. The allosteric effector GTP functions by stabilizing the protein conformation that binds the tetrahedral intermediate(s) formed during glutamine hydrolysis. Inhibited by the product CTP, via allosteric rather than competitive inhibition. In terms of biological role, catalyzes the ATP-dependent amination of UTP to CTP with either L-glutamine or ammonia as the source of nitrogen. Regulates intracellular CTP levels through interactions with the four ribonucleotide triphosphates. This is CTP synthase from Rhizorhabdus wittichii (strain DSM 6014 / CCUG 31198 / JCM 15750 / NBRC 105917 / EY 4224 / RW1) (Sphingomonas wittichii).